Reading from the N-terminus, the 137-residue chain is MPTINQLVRKPRKSKVSKSKSPALNFGYNSMKKKATNNAAPQKRGVATRVGTMTPKKPNSALRKYARVRLSNLYEVTAYIPGIGHNLQEHSVVLIRGGRVKDLPGVRYHIIRGALDTAGVDGRMTSRSKYGTKAPKK.

Disordered stretches follow at residues 1-22 (MPTI…SKSP) and 35-57 (ATNN…TPKK). Over residues 9–18 (RKPRKSKVSK) the composition is skewed to basic residues. Residue Asp102 is modified to 3-methylthioaspartic acid.

The protein belongs to the universal ribosomal protein uS12 family. Part of the 30S ribosomal subunit. Contacts proteins S8 and S17. May interact with IF1 in the 30S initiation complex.

Functionally, with S4 and S5 plays an important role in translational accuracy. Its function is as follows. Interacts with and stabilizes bases of the 16S rRNA that are involved in tRNA selection in the A site and with the mRNA backbone. Located at the interface of the 30S and 50S subunits, it traverses the body of the 30S subunit contacting proteins on the other side and probably holding the rRNA structure together. The combined cluster of proteins S8, S12 and S17 appears to hold together the shoulder and platform of the 30S subunit. This chain is Small ribosomal subunit protein uS12, found in Leuconostoc mesenteroides subsp. mesenteroides (strain ATCC 8293 / DSM 20343 / BCRC 11652 / CCM 1803 / JCM 6124 / NCDO 523 / NBRC 100496 / NCIMB 8023 / NCTC 12954 / NRRL B-1118 / 37Y).